Here is a 508-residue protein sequence, read N- to C-terminus: Photosystem II CP47 reaction center protein (508 aa).

A run of 6 helical transmembrane segments spans residues 21–36 (SVHI…WAGS), 101–115 (IVFS…IWHW), 140–156 (GIHL…FGAF), 203–218 (IAAG…FHLS), 237–252 (VLSS…AFVV), and 457–472 (SFAL…HGAR).

This sequence belongs to the PsbB/PsbC family. PsbB subfamily. In terms of assembly, PSII is composed of 1 copy each of membrane proteins PsbA, PsbB, PsbC, PsbD, PsbE, PsbF, PsbH, PsbI, PsbJ, PsbK, PsbL, PsbM, PsbT, PsbX, PsbY, PsbZ, Psb30/Ycf12, at least 3 peripheral proteins of the oxygen-evolving complex and a large number of cofactors. It forms dimeric complexes. Binds multiple chlorophylls. PSII binds additional chlorophylls, carotenoids and specific lipids. is required as a cofactor.

The protein localises to the plastid. It is found in the chloroplast thylakoid membrane. One of the components of the core complex of photosystem II (PSII). It binds chlorophyll and helps catalyze the primary light-induced photochemical processes of PSII. PSII is a light-driven water:plastoquinone oxidoreductase, using light energy to abstract electrons from H(2)O, generating O(2) and a proton gradient subsequently used for ATP formation. This is Photosystem II CP47 reaction center protein from Acorus calamus var. americanus (American sweet flag).